The sequence spans 247 residues: MLRRVSIEETWEVAKNIKAFRLSEKLEFTPGQFIMLWLPGVEEKPLSLADKNLIMVKKVGRFTNELFKLKEGDYVWIRGPYGHGFSGKGKSVALIAGGIGIPPIYALAKYGNFKRSILIYGARTKEEIALPKDIESYVDEVIITTDDGSYGIKGFPTDVLMERRSEFDYVYACGPEIMLAKILEIMEFENVEVSAERYMKCGIGVCGSCALGPYLVCRDGPVFSGKQLINTEFGKYSRTPDGRIKPL.

Positions Met-1–Gly-87 constitute an FAD-binding FR-type domain. [2Fe-2S] cluster-binding residues include Cys-201, Cys-206, Cys-209, and Cys-217.

Belongs to the PyrK family. As to quaternary structure, heterotetramer of 2 PyrK and 2 PyrD type B subunits. Requires [2Fe-2S] cluster as cofactor. FAD serves as cofactor.

Its pathway is pyrimidine metabolism; UMP biosynthesis via de novo pathway; orotate from (S)-dihydroorotate (NAD(+) route): step 1/1. Functionally, responsible for channeling the electrons from the oxidation of dihydroorotate from the FMN redox center in the PyrD type B subunit to the ultimate electron acceptor NAD(+). In Pyrococcus furiosus (strain ATCC 43587 / DSM 3638 / JCM 8422 / Vc1), this protein is Probable dihydroorotate dehydrogenase B (NAD(+)), electron transfer subunit.